The following is a 227-amino-acid chain: ATP synthase F(0) complex subunit a (227 aa).

Transmembrane regions (helical) follow at residues 12-32, 69-89, 98-118, 139-159, 170-190, and 196-216; these read PYLM…LLFP, WALL…MGLL, QLSM…LIGL, IPIL…ALGV, LLIQ…PSIS, and ILLL…YVFV.

The protein belongs to the ATPase A chain family. In terms of assembly, component of the ATP synthase complex composed at least of ATP5F1A/subunit alpha, ATP5F1B/subunit beta, ATP5MC1/subunit c (homooctomer), MT-ATP6/subunit a, MT-ATP8/subunit 8, ATP5ME/subunit e, ATP5MF/subunit f, ATP5MG/subunit g, ATP5MK/subunit k, ATP5MJ/subunit j, ATP5F1C/subunit gamma, ATP5F1D/subunit delta, ATP5F1E/subunit epsilon, ATP5PF/subunit F6, ATP5PB/subunit b, ATP5PD/subunit d, ATP5PO/subunit OSCP. ATP synthase complex consists of a soluble F(1) head domain (subunits alpha(3) and beta(3)) - the catalytic core - and a membrane F(0) domain - the membrane proton channel (subunits c, a, 8, e, f, g, k and j). These two domains are linked by a central stalk (subunits gamma, delta, and epsilon) rotating inside the F1 region and a stationary peripheral stalk (subunits F6, b, d, and OSCP). Interacts with DNAJC30; interaction is direct.

It localises to the mitochondrion inner membrane. It catalyses the reaction H(+)(in) = H(+)(out). Subunit a, of the mitochondrial membrane ATP synthase complex (F(1)F(0) ATP synthase or Complex V) that produces ATP from ADP in the presence of a proton gradient across the membrane which is generated by electron transport complexes of the respiratory chain. ATP synthase complex consist of a soluble F(1) head domain - the catalytic core - and a membrane F(1) domain - the membrane proton channel. These two domains are linked by a central stalk rotating inside the F(1) region and a stationary peripheral stalk. During catalysis, ATP synthesis in the catalytic domain of F(1) is coupled via a rotary mechanism of the central stalk subunits to proton translocation. With the subunit c (ATP5MC1), forms the proton-conducting channel in the F(0) domain, that contains two crucial half-channels (inlet and outlet) that facilitate proton movement from the mitochondrial intermembrane space (IMS) into the matrix. Protons are taken up via the inlet half-channel and released through the outlet half-channel, following a Grotthuss mechanism. The polypeptide is ATP synthase F(0) complex subunit a (Coturnix japonica (Japanese quail)).